The following is a 71-amino-acid chain: Large ribosomal subunit protein bL32c (71 aa).

Residues M1 to K24 are disordered.

The protein belongs to the bacterial ribosomal protein bL32 family.

It localises to the plastid. Its subcellular location is the chloroplast. This Pinus koraiensis (Korean pine) protein is Large ribosomal subunit protein bL32c.